A 399-amino-acid polypeptide reads, in one-letter code: S-adenosylmethionine synthase (399 aa).

Histidine 17 lines the ATP pocket. Aspartate 19 is a Mg(2+) binding site. Glutamate 45 provides a ligand contact to K(+). L-methionine is bound by residues glutamate 58 and glutamine 101. The flexible loop stretch occupies residues glutamine 101–glutamine 111. Residues aspartate 177 to lysine 179, arginine 244 to phenylalanine 245, aspartate 253, arginine 259 to lysine 260, alanine 276, and lysine 280 contribute to the ATP site. Residue aspartate 253 participates in L-methionine binding. Lysine 284 provides a ligand contact to L-methionine.

Belongs to the AdoMet synthase family. In terms of assembly, homotetramer; dimer of dimers. Mg(2+) is required as a cofactor. The cofactor is K(+).

The protein localises to the cytoplasm. It catalyses the reaction L-methionine + ATP + H2O = S-adenosyl-L-methionine + phosphate + diphosphate. Its pathway is amino-acid biosynthesis; S-adenosyl-L-methionine biosynthesis; S-adenosyl-L-methionine from L-methionine: step 1/1. Its function is as follows. Catalyzes the formation of S-adenosylmethionine (AdoMet) from methionine and ATP. The overall synthetic reaction is composed of two sequential steps, AdoMet formation and the subsequent tripolyphosphate hydrolysis which occurs prior to release of AdoMet from the enzyme. The protein is S-adenosylmethionine synthase of Bacillus cereus (strain B4264).